The following is a 134-amino-acid chain: Sec-independent protein translocase protein TatB (134 aa).

Residues 2-22 (FDGIGFMELLLIGILGLVVLG) form a helical membrane-spanning segment. Residues 90-134 (AESVNRPYKVEDTSPVAPKASPDESPSVVEAKSSEATSENSSTPK) are disordered. Residues 123–134 (SEATSENSSTPK) show a composition bias toward polar residues.

The protein belongs to the TatB family. In terms of assembly, the Tat system comprises two distinct complexes: a TatABC complex, containing multiple copies of TatA, TatB and TatC subunits, and a separate TatA complex, containing only TatA subunits. Substrates initially bind to the TatABC complex, which probably triggers association of the separate TatA complex to form the active translocon.

It localises to the cell inner membrane. Functionally, part of the twin-arginine translocation (Tat) system that transports large folded proteins containing a characteristic twin-arginine motif in their signal peptide across membranes. Together with TatC, TatB is part of a receptor directly interacting with Tat signal peptides. TatB may form an oligomeric binding site that transiently accommodates folded Tat precursor proteins before their translocation. The protein is Sec-independent protein translocase protein TatB of Shewanella frigidimarina (strain NCIMB 400).